A 504-amino-acid chain; its full sequence is Cytochrome P450 6B2 (504 aa).

Cys445 serves as a coordination point for heme.

The protein belongs to the cytochrome P450 family. Requires heme as cofactor.

Its subcellular location is the endoplasmic reticulum membrane. It is found in the microsome membrane. It carries out the reaction an organic molecule + reduced [NADPH--hemoprotein reductase] + O2 = an alcohol + oxidized [NADPH--hemoprotein reductase] + H2O + H(+). This Helicoverpa armigera (Cotton bollworm) protein is Cytochrome P450 6B2 (CYP6B2).